The following is a 262-amino-acid chain: Thiazole synthase (262 aa).

K96 functions as the Schiff-base intermediate with DXP in the catalytic mechanism. Residues G157, 184 to 185, and 206 to 207 each bind 1-deoxy-D-xylulose 5-phosphate; these read AG and NT.

Belongs to the ThiG family. In terms of assembly, homotetramer. Forms heterodimers with either ThiH or ThiS.

The protein localises to the cytoplasm. The catalysed reaction is [ThiS sulfur-carrier protein]-C-terminal-Gly-aminoethanethioate + 2-iminoacetate + 1-deoxy-D-xylulose 5-phosphate = [ThiS sulfur-carrier protein]-C-terminal Gly-Gly + 2-[(2R,5Z)-2-carboxy-4-methylthiazol-5(2H)-ylidene]ethyl phosphate + 2 H2O + H(+). Its pathway is cofactor biosynthesis; thiamine diphosphate biosynthesis. Functionally, catalyzes the rearrangement of 1-deoxy-D-xylulose 5-phosphate (DXP) to produce the thiazole phosphate moiety of thiamine. Sulfur is provided by the thiocarboxylate moiety of the carrier protein ThiS. In vitro, sulfur can be provided by H(2)S. This chain is Thiazole synthase, found in Legionella pneumophila (strain Lens).